The following is a 216-amino-acid chain: Uracil phosphoribosyltransferase (216 aa).

Residues Arg30, Arg39, 73-76 (ASKI), and Lys75 contribute to the GTP site. Arg83 serves as a coordination point for 5-phospho-alpha-D-ribose 1-diphosphate. Position 100 (Lys100) interacts with GTP. Residue Arg108 coordinates 5-phospho-alpha-D-ribose 1-diphosphate. Arg129 provides a ligand contact to GTP. Residues Asp135 and 135–143 (DPMLATGGT) contribute to the 5-phospho-alpha-D-ribose 1-diphosphate site. Tyr199 serves as a coordination point for D-ribose 5-phosphate. Uracil-binding positions include Ile200 and 205–207 (GDF). Asp206 contributes to the 5-phospho-alpha-D-ribose 1-diphosphate binding site.

Belongs to the UPRTase family. Mg(2+) serves as cofactor.

It carries out the reaction UMP + diphosphate = 5-phospho-alpha-D-ribose 1-diphosphate + uracil. It functions in the pathway pyrimidine metabolism; UMP biosynthesis via salvage pathway; UMP from uracil: step 1/1. Allosterically activated by GTP. In terms of biological role, catalyzes the conversion of uracil and 5-phospho-alpha-D-ribose 1-diphosphate (PRPP) to UMP and diphosphate. This is Uracil phosphoribosyltransferase (uprt) from Dictyostelium discoideum (Social amoeba).